Reading from the N-terminus, the 467-residue chain is MLATDSDPIVAIATASGRGGIGVVRLSLGRAGEAAARALSDALCGARLMPRHASYVPFLDGAGEPLDRGIALYFPAPHSYTGEHVIELQGHGGPIVLQLLLQRCLDAGRAHGLRLAEPGEFTRRAFLNDKLDLAQAEAVADLIEASTEAAARSAGRSLDGAFSRDIHALVDDVIALRMLVEATLDFPEEEIDFLEAADARGKLAHIRERLAHVLGDARQGALLREGLSVVLAGQPNVGKSSLLNALAGAELAIVTPIAGTTRDKVAQTIQIEGIPLHIIDTAGLRETEDEVEKIGIARTWGEIERADVVLHLLDARSGLGPGDEAIAARFPDGVPVVRVLNKTDLTGAPASVTRTGGGAARADVCEVRLSAKRGDGIDLLRGELLRIAGWQAGAESVYLARERHLIALRAAQAHLARAAEHAEQNAQALDLFAEELRLAQERLNSITGEFTSDDLLGVIFSRFCIGK.

The (6S)-5-formyl-5,6,7,8-tetrahydrofolate site is built by R25, E87, and K130. The 164-residue stretch at 226–389 (GLSVVLAGQP…LRGELLRIAG (164 aa)) folds into the TrmE-type G domain. N236 contacts K(+). GTP contacts are provided by residues 236–241 (NVGKSS), 255–261 (TPIAGTT), and 280–283 (DTAG). S240 lines the Mg(2+) pocket. T255, I257, and T260 together coordinate K(+). T261 provides a ligand contact to Mg(2+). Residue K467 coordinates (6S)-5-formyl-5,6,7,8-tetrahydrofolate.

It belongs to the TRAFAC class TrmE-Era-EngA-EngB-Septin-like GTPase superfamily. TrmE GTPase family. In terms of assembly, homodimer. Heterotetramer of two MnmE and two MnmG subunits. K(+) is required as a cofactor.

It is found in the cytoplasm. In terms of biological role, exhibits a very high intrinsic GTPase hydrolysis rate. Involved in the addition of a carboxymethylaminomethyl (cmnm) group at the wobble position (U34) of certain tRNAs, forming tRNA-cmnm(5)s(2)U34. The polypeptide is tRNA modification GTPase MnmE (Burkholderia mallei (strain NCTC 10247)).